Here is a 365-residue protein sequence, read N- to C-terminus: uncharacterized protein (365 aa).

Composition is skewed to basic and acidic residues over residues 1-27 (MDNVQEHDPDTQEHNNETQNHKQEDHS) and 315-339 (AKDDEQYAKRLAKEEEERGKKETPK). Disordered stretches follow at residues 1–31 (MDNVQEHDPDTQEHNNETQNHKQEDHSNSYQ) and 308–365 (KEEK…CLIS). Residues 340–353 (KASNTPRRNKSNTQ) show a composition bias toward polar residues.

To yeast YGL082w. Interacts with sad1.

The protein localises to the cytoplasm. This is an uncharacterized protein from Schizosaccharomyces pombe (strain 972 / ATCC 24843) (Fission yeast).